A 398-amino-acid polypeptide reads, in one-letter code: Phosphoglycerate kinase (398 aa).

Residues 24-26, Arg39, 62-65, Arg121, and Arg154 each bind substrate; these read DFN and HFGR. ATP contacts are provided by residues Lys205, Gly296, Glu327, and 354 to 357; that span reads GGDS.

It belongs to the phosphoglycerate kinase family. In terms of assembly, monomer.

It is found in the cytoplasm. It catalyses the reaction (2R)-3-phosphoglycerate + ATP = (2R)-3-phospho-glyceroyl phosphate + ADP. The protein operates within carbohydrate degradation; glycolysis; pyruvate from D-glyceraldehyde 3-phosphate: step 2/5. This chain is Phosphoglycerate kinase, found in Trichodesmium erythraeum (strain IMS101).